The chain runs to 396 residues: Acetate kinase (396 aa).

Asn7 is a Mg(2+) binding site. Residue Lys14 coordinates ATP. Arg88 lines the substrate pocket. Asp145 functions as the Proton donor/acceptor in the catalytic mechanism. Residues 205–209 (HLGNG), 279–281 (DFR), and 327–331 (GIGEN) contribute to the ATP site. A Mg(2+)-binding site is contributed by Glu381.

The protein belongs to the acetokinase family. In terms of assembly, homodimer. Mg(2+) is required as a cofactor. It depends on Mn(2+) as a cofactor.

It localises to the cytoplasm. The catalysed reaction is acetate + ATP = acetyl phosphate + ADP. It functions in the pathway metabolic intermediate biosynthesis; acetyl-CoA biosynthesis; acetyl-CoA from acetate: step 1/2. In terms of biological role, catalyzes the formation of acetyl phosphate from acetate and ATP. Can also catalyze the reverse reaction. This Campylobacter jejuni subsp. doylei (strain ATCC BAA-1458 / RM4099 / 269.97) protein is Acetate kinase.